Consider the following 394-residue polypeptide: Stabilizer of axonemal microtubules 2 (394 aa).

Mn regions lie at residues 110–122 (STTF…PQEI), 144–158 (DTSH…QLEV), 244–256 (NSTS…PYQA), 278–292 (KSTT…EICR), 312–324 (LSTF…PHEL), and 346–360 (VTMY…KQEI).

It belongs to the FAM154 family.

The protein is Stabilizer of axonemal microtubules 2 (Saxo2) of Mus musculus (Mouse).